Consider the following 87-residue polypeptide: Cell division topological specificity factor (87 aa).

Belongs to the MinE family.

In terms of biological role, prevents the cell division inhibition by proteins MinC and MinD at internal division sites while permitting inhibition at polar sites. This ensures cell division at the proper site by restricting the formation of a division septum at the midpoint of the long axis of the cell. In Roseiflexus castenholzii (strain DSM 13941 / HLO8), this protein is Cell division topological specificity factor.